Consider the following 142-residue polypeptide: Baculoviral IAP repeat-containing protein 5 (142 aa).

A BIR repeat occupies 18–88 (RVSTFKNWPF…KHSSGCAFLS (71 aa)). S20 carries the phosphoserine; by AURKC modification. K23 carries the N6-acetyllysine modification. T34 is subject to Phosphothreonine; by CDK1 and CDK15. A Phosphothreonine; by CK2; in vitro modification is found at T48. Zn(2+) is bound by residues C57, C60, H77, and C84. Residues K90, K110, K112, and K115 each carry the N6-acetyllysine modification. At T117 the chain carries Phosphothreonine; by AURKB.

The protein belongs to the IAP family. Monomer or homodimer. Exists as a homodimer in the apo state and as a monomer in the CPC-bound state. The monomer protects cells against apoptosis more efficiently than the dimer. Only the dimeric form is capable of enhancing tubulin stability in cells. When phosphorylated, interacts with LAMTOR5/HBXIP; the resulting complex binds pro-CASP9, as well as active CASP9, but much less efficiently. Component of the chromosomal passenger complex (CPC) composed of at least BIRC5/survivin, CDCA8/borealin, INCENP, AURKB or AURKC; in the complex forms a triple-helix bundle-based subcomplex with INCENP and CDCA8. Interacts with JTB. Interacts (via BIR domain) with histone H3 phosphorylated at 'Thr-3' (H3pT3). Interacts with EVI5. Interacts with GTP-bound RAN in both the S and M phases of the cell cycle. Interacts with USP9X. Interacts with tubulin. Interacts with BIRC2/c-IAP1. The monomeric form interacts with XIAP/BIRC4. Both the dimeric and monomeric form can interact with DIABLO/SMAC. Interacts with BIRC6/bruce. Interacts with FBXL7; this interaction facilitates the polyubiquitination and subsequent proteasomal degradation of BIRC5 by the SCF(FBXL7) E3 ubiquitin-protein ligase complex. Post-translationally, ubiquitinated by the Cul9-RING ubiquitin-protein ligase complex, leading to its degradation. Ubiquitination is required for centrosomal targeting. Deubiquitinated by USP35 or USP38; leading to stabilization. In vitro phosphorylation at Thr-117 by AURKB prevents interaction with INCENP and localization to mitotic chromosomes. Phosphorylation at Thr-48 by CK2 is critical for its mitotic and anti-apoptotic activities. Phosphorylation at Thr-34 by CDK15 is critical for its anti-apoptotic activity. Phosphorylation at Ser-20 by AURKC is critical for regulation of proper chromosome alignment and segregation, and possibly cytokinesis. In terms of tissue distribution, expressed in spleen, lung, brain, heart, kidney and intestine (at protein level). Expressed in cochlea including the organ of Corti, the lateral wall, the interdental cells of the Limbus as well as in cells of the cochlear nerve and the spiral ganglions (at protein level). Also expressed in Schwann cells (at protein level). Not expressed in cells of the inner and outer sulcus or the Reissner's membrane (at protein level).

It localises to the cytoplasm. The protein localises to the nucleus. The protein resides in the chromosome. Its subcellular location is the centromere. It is found in the cytoskeleton. It localises to the spindle. The protein localises to the kinetochore. The protein resides in the midbody. Multitasking protein that has dual roles in promoting cell proliferation and preventing apoptosis. Component of a chromosome passage protein complex (CPC) which is essential for chromosome alignment and segregation during mitosis and cytokinesis. Acts as an important regulator of the localization of this complex; directs CPC movement to different locations from the inner centromere during prometaphase to midbody during cytokinesis and participates in the organization of the center spindle by associating with polymerized microtubules. Involved in the recruitment of CPC to centromeres during early mitosis via association with histone H3 phosphorylated at 'Thr-3' (H3pT3) during mitosis. The complex with RAN plays a role in mitotic spindle formation by serving as a physical scaffold to help deliver the RAN effector molecule TPX2 to microtubules. May counteract a default induction of apoptosis in G2/M phase. The acetylated form represses STAT3 transactivation of target gene promoters. May play a role in neoplasia. Inhibitor of CASP3 and CASP7. Essential for the maintenance of mitochondrial integrity and function. The chain is Baculoviral IAP repeat-containing protein 5 from Cavia porcellus (Guinea pig).